Here is a 228-residue protein sequence, read N- to C-terminus: 7-cyano-7-deazaguanine synthase (228 aa).

L7–L17 contacts ATP. Zn(2+)-binding residues include C190, C202, C205, and C208.

It belongs to the QueC family. Requires Zn(2+) as cofactor.

It catalyses the reaction 7-carboxy-7-deazaguanine + NH4(+) + ATP = 7-cyano-7-deazaguanine + ADP + phosphate + H2O + H(+). It functions in the pathway purine metabolism; 7-cyano-7-deazaguanine biosynthesis. Catalyzes the ATP-dependent conversion of 7-carboxy-7-deazaguanine (CDG) to 7-cyano-7-deazaguanine (preQ(0)). This Acaryochloris marina (strain MBIC 11017) protein is 7-cyano-7-deazaguanine synthase.